A 219-amino-acid chain; its full sequence is Thiamine-phosphate synthase (219 aa).

Residues 44-48 (QFREK) and Asn-79 contribute to the 4-amino-2-methyl-5-(diphosphooxymethyl)pyrimidine site. Asp-80 and Asp-99 together coordinate Mg(2+). Position 117 (Ser-117) interacts with 4-amino-2-methyl-5-(diphosphooxymethyl)pyrimidine. 143 to 145 (TST) is a 2-[(2R,5Z)-2-carboxy-4-methylthiazol-5(2H)-ylidene]ethyl phosphate binding site. Lys-146 serves as a coordination point for 4-amino-2-methyl-5-(diphosphooxymethyl)pyrimidine. Residues Gly-175 and 195-196 (IS) contribute to the 2-[(2R,5Z)-2-carboxy-4-methylthiazol-5(2H)-ylidene]ethyl phosphate site.

This sequence belongs to the thiamine-phosphate synthase family. Mg(2+) is required as a cofactor.

It carries out the reaction 2-[(2R,5Z)-2-carboxy-4-methylthiazol-5(2H)-ylidene]ethyl phosphate + 4-amino-2-methyl-5-(diphosphooxymethyl)pyrimidine + 2 H(+) = thiamine phosphate + CO2 + diphosphate. The catalysed reaction is 2-(2-carboxy-4-methylthiazol-5-yl)ethyl phosphate + 4-amino-2-methyl-5-(diphosphooxymethyl)pyrimidine + 2 H(+) = thiamine phosphate + CO2 + diphosphate. The enzyme catalyses 4-methyl-5-(2-phosphooxyethyl)-thiazole + 4-amino-2-methyl-5-(diphosphooxymethyl)pyrimidine + H(+) = thiamine phosphate + diphosphate. It participates in cofactor biosynthesis; thiamine diphosphate biosynthesis; thiamine phosphate from 4-amino-2-methyl-5-diphosphomethylpyrimidine and 4-methyl-5-(2-phosphoethyl)-thiazole: step 1/1. Condenses 4-methyl-5-(beta-hydroxyethyl)thiazole monophosphate (THZ-P) and 2-methyl-4-amino-5-hydroxymethyl pyrimidine pyrophosphate (HMP-PP) to form thiamine monophosphate (TMP). The protein is Thiamine-phosphate synthase of Bacillus cereus (strain AH187).